The sequence spans 539 residues: Acid-sensing ion channel 4 (539 aa).

Residues 1-68 (MPIEIVCKIK…GPGPHGLRRT (68 aa)) are Cytoplasmic-facing. A helical membrane pass occupies residues 69 to 89 (LWVLALLTSLAAFLYQAASLA). The Extracellular portion of the chain corresponds to 90–438 (RGYLTRPHLV…EQRAAYGLSA (349 aa)). 2 disulfides stabilise this stretch: cysteine 118-cysteine 202 and cysteine 180-cysteine 187. Residues asparagine 191, asparagine 243, asparagine 341, and asparagine 376 are each glycosylated (N-linked (GlcNAc...) asparagine). Intrachain disulfides connect cysteine 296-cysteine 375, cysteine 318-cysteine 371, cysteine 322-cysteine 369, cysteine 331-cysteine 353, and cysteine 333-cysteine 345. A helical membrane pass occupies residues 439–459 (LLGDLGGQMGLFIGASILTLL). Positions 452-454 (GAS) match the GAS motif; ion selectivity filter motif. Residues 460 to 539 (EILDYIYEVS…PGSLFEDFAC (80 aa)) are Cytoplasmic-facing. The disordered stretch occupies residues 501–531 (EQSPCPNRGRAEGGGASNLLPNHHHPHGPPG).

This sequence belongs to the amiloride-sensitive sodium channel (TC 1.A.6) family. ASIC4 subfamily. In terms of assembly, homotrimer. Heterotrimer; with other ASIC proteins producing functional channels. Expressed in brain, spinal cord and dorsal root ganglion (DRG). Expressed by a subset of sensory neurons in the DRG. Expressed by granule cells in the cerebellar cortex. In hippocampus, expression is detected in dentate gyrus granule cells, in pyramidal cells of CA1-CA3 subfields and in interneurons of the striatum oriens and radiatum of all subfields. In cerebral cortex expressed in small, medium and large pyramidal cells in layers 2, 3 and 5 respectively. Also expressed in striatum, globus pallidus, inferior and superior calliculi, amygdala, magnocellular preoptic nucleus, islands of Calleja and large neurons of olfactory tubercules.

It is found in the cell membrane. In terms of biological role, does not exhibit measurable stand-alone pH-gated sodium channel activity but may form pH-gated heterotrimeric sodium channels. Its activity could also depend on alternative gating mechanisms. In Rattus norvegicus (Rat), this protein is Acid-sensing ion channel 4.